A 353-amino-acid polypeptide reads, in one-letter code: UDP-galactose transporter (353 aa).

The next 6 membrane-spanning stretches (helical) occupy residues 147–167, 184–204, 215–235, 254–274, 279–299, and 302–322; these read LGPM…IVQL, VTGF…GVYF, LWVR…FTIL, IVWL…LCVA, IMKN…SVYL, and FKIS…TFLY. The tract at residues 325 to 353 is disordered; that stretch reads PESKPSPSRGTYIPMTTQDAAAKDVDHKH. Residues 329 to 343 show a composition bias toward polar residues; sequence PSPSRGTYIPMTTQD.

The protein belongs to the nucleotide-sugar transporter family. SLC35A subfamily.

The protein localises to the golgi apparatus membrane. In terms of biological role, essential for the transport of UDP-galactose into the lumen of Golgi apparatus. This chain is UDP-galactose transporter (gms1), found in Schizosaccharomyces pombe (strain 972 / ATCC 24843) (Fission yeast).